Here is a 118-residue protein sequence, read N- to C-terminus: MARIAGVNIPNNKQIEIALTYIYGIGRTRARTVLSAADIACDMRVKDISEPELERIRSEVAKFLVEGDLRREVTMNIKRLMDLGCYRGIRHRRGLPVHGQRTKTNARTRKGPAKSITR.

The interval 94-118 (GLPVHGQRTKTNARTRKGPAKSITR) is disordered.

It belongs to the universal ribosomal protein uS13 family. As to quaternary structure, part of the 30S ribosomal subunit. Forms a loose heterodimer with protein S19. Forms two bridges to the 50S subunit in the 70S ribosome.

Located at the top of the head of the 30S subunit, it contacts several helices of the 16S rRNA. In the 70S ribosome it contacts the 23S rRNA (bridge B1a) and protein L5 of the 50S subunit (bridge B1b), connecting the 2 subunits; these bridges are implicated in subunit movement. Contacts the tRNAs in the A and P-sites. This Acidithiobacillus ferrooxidans (strain ATCC 23270 / DSM 14882 / CIP 104768 / NCIMB 8455) (Ferrobacillus ferrooxidans (strain ATCC 23270)) protein is Small ribosomal subunit protein uS13.